Reading from the N-terminus, the 61-residue chain is U-stichotoxin-Hcr1b (61 aa).

Residues 1–19 form the signal peptide; the sequence is PILIFAFVMFAVMVNAKPS. The propeptide occupies 20 to 31; the sequence is IDDAEMKREPKP. 2 cysteine pairs are disulfide-bonded: C38–C49 and C41–C56.

Belongs to the Hau1a/HC18/HC19 family.

Its subcellular location is the secreted. The protein localises to the nematocyst. Functionally, toxin that is lethal to crab. Does not produce the typical symptoms associated with sodium channel toxins in crabs, suggesting that it likely does not act on sodium channels. The polypeptide is U-stichotoxin-Hcr1b (Radianthus crispa (Leathery sea anemone)).